The following is a 123-amino-acid chain: Defensin beta 118 (123 aa).

A signal peptide spans 1-19; sequence MKLLLLALPMLVLLPQVIP. Cystine bridges form between cysteine 27/cysteine 54, cysteine 34/cysteine 48, and cysteine 38/cysteine 55. The propeptide occupies 65–123; the sequence is VPATSPTPLSDSTPGIIDDILTVRFTTDYFEVSSKKDMVEESEAGRGTETSLPNVHHSS. The segment covering 100-110 has biased composition (basic and acidic residues); that stretch reads KDMVEESEAGR. Residues 100–123 are disordered; sequence KDMVEESEAGRGTETSLPNVHHSS. The segment covering 112–123 has biased composition (polar residues); it reads TETSLPNVHHSS.

This sequence belongs to the beta-defensin family. Post-translationally, the three-dimensional structure formed by the three intramolecular disulfide bridges is indispensable for antimicrobial activity. As to expression, high-level and epididymis-specific expression. Most abundant in the epithelium of the caput and present in the epididymis lumen and bound to sperm. Also expressed in pancreas.

Its subcellular location is the secreted. Functionally, host defense peptide that exhibits antimicrobial activity against both Gram-negative bacteria, such as E.coli and S.typhimurium, and Gram-positive bacteria, such as S.aureus and B.subtilis. Inhibits cell adhesion of E.coli on intestinal epithelial enterocytes. Causes rapid permeabilization of both the outer and inner membrane of E.coli, leading to morphological alterations on the bacterial surface. Binds to bacterial lipopolysaccharides (LPS) with high affinity, and may thereby be involved in immunoregulation through LPS neutralization. May contribute to epididymal innate immunity and protect the sperm against attack by microorganisms. The protein is Defensin beta 118 (DEFB118) of Homo sapiens (Human).